Here is a 465-residue protein sequence, read N- to C-terminus: MDTLRSISSELVRSSQLRWTLFSVIANMSLTLSIWIGVYNMEVNSELSKTYFLDPSFEQTTGNLLLDGFINGVGTILVLGCVSFIMLAFVLFDFRRIVKAWLTLSCLLILFGVSAQTLHDMFSQVFDQDDNNQYYMTIVLIVVPTVVYGFGGIYAFFSNSSLILHQIFVVTNCSLISVFYLRVFPSKTTWFVLWIVLFWDLFAVLAPMGPLKKVQEKASDYSKCVLNLIMFSANEKRLTAGSNQEETNEGEESTIRRTVKQTIEYYTKREAQDDEFYQKIRQRRAAINPDSVPTEHSPLVEAEPSPIELKEKNSTEELSDDESDTSETSSGSSNLSSSDSSTTVSTSDISTAEECDQKEWDDLVSNSLPNNDKRPATAADALNDGEVLRLGFGDFVFYSLLIGQAAASGCPFAVISAALGILFGLVVTLTVFSTEESTTPALPLPVICGTFCYFSSMFFWEQLYG.

The Cytoplasmic segment spans residues methionine 1–arginine 18. Residues tryptophan 19–tyrosine 39 form a helical membrane-spanning segment. Over asparagine 40–asparagine 71 the chain is Lumenal. The helical transmembrane segment at glycine 72–phenylalanine 92 threads the bilayer. Over aspartate 93 to arginine 96 the chain is Cytoplasmic. The chain crosses the membrane as a helical span at residues isoleucine 97–threonine 117. Topologically, residues leucine 118–methionine 136 are lumenal. The helical transmembrane segment at threonine 137–phenylalanine 157 threads the bilayer. Over serine 158 to serine 160 the chain is Cytoplasmic. Residues serine 161–leucine 181 form a helical membrane-spanning segment. Over arginine 182–tryptophan 190 the chain is Lumenal. A helical membrane pass occupies residues phenylalanine 191 to leucine 211. Aspartate 200 is an active-site residue. Over lysine 212–arginine 389 the chain is Cytoplasmic. Residues isoleucine 287–aspartate 356 form a disordered region. The segment covering serine 326–serine 350 has biased composition (low complexity). A helical membrane pass occupies residues leucine 390–cysteine 410. Aspartate 394 is an active-site residue. Position 411 (proline 411) is a topological domain, lumenal. The helical transmembrane segment at phenylalanine 412–phenylalanine 432 threads the bilayer. The Cytoplasmic portion of the chain corresponds to serine 433 to threonine 439. Residues proline 440 to leucine 442 carry the PAL motif. An intramembrane region (helical) is located at residues proline 440 to tryptophan 460. The Cytoplasmic segment spans residues glutamate 461–glycine 465.

This sequence belongs to the peptidase A22A family. As to quaternary structure, homodimer. Potential component of the gamma-secretase complex, a complex probably composed of the presenilin homodimer (sel-12, hop-1 or spe-4), nicastrin (aph-2), aph-1 and pen-2.

The protein resides in the endoplasmic reticulum membrane. It is found in the golgi apparatus. Its subcellular location is the cis-Golgi network membrane. Potential catalytic subunit of the gamma-secretase complex during spermatogenesis, an endoprotease complex that catalyzes the intramembrane cleavage of integral membrane proteins such as Notch receptors (lin-12 or glp-1). Involved in spermatid formation during meiosis II. May be required for proper localization of macromolecules that are subject to asymmetric partitioning during spermatogenesis. The protein is Presenilin spe-4 of Caenorhabditis elegans.